Reading from the N-terminus, the 320-residue chain is Taste receptor type 2 member 129 (320 aa).

The Extracellular segment spans residues 1–8; sequence MDGIVQNM. The chain crosses the membrane as a helical span at residues 9-29; the sequence is FTFIVIVEIIIGWIGNGFIAL. Residues 30-55 are Cytoplasmic-facing; sequence VNCIHWYKRRKISALNQILTALAFSR. A helical membrane pass occupies residues 56-76; the sequence is IYLLLTVFTVIAVSTLYTHVL. The Extracellular portion of the chain corresponds to 77–88; the sequence is VTRRVVKLINFH. Residues 89–109 traverse the membrane as a helical segment; sequence LLFSNHFSMWLAACLGLYYFL. Topologically, residues 110 to 128 are cytoplasmic; it reads KIAHFPNSIFVYLKMRINQ. Residues 129-149 form a helical membrane-spanning segment; that stretch reads VVSGTLLMSLGLLFLNTLLIN. At 150-185 the chain is on the extracellular side; it reads SYIDTKIDDYREHLLYDFTSNNTASFYRVILVINNC. An N-linked (GlcNAc...) asparagine glycan is attached at asparagine 170. Residues 186–206 traverse the membrane as a helical segment; sequence IFTSIPFTLSQSTFLLLIFSL. The Cytoplasmic portion of the chain corresponds to 207 to 233; that stretch reads WRHYKKMQQHAQRCRDVLADAHIRVLQ. Residues 234–254 form a helical membrane-spanning segment; sequence TMVTYVLLCAIFFLSLSMQIL. The Extracellular portion of the chain corresponds to 255-264; sequence RSELLKNILY. A helical membrane pass occupies residues 265-285; the sequence is VRFCEIVAAVFPSGHSCVLIC. Over 286–320 the chain is Cytoplasmic; sequence RDTNLRGTFLSVLSWLKQRFTSWIPNINCRSSCIF.

The protein belongs to the G-protein coupled receptor T2R family.

The protein localises to the membrane. Its function is as follows. Putative taste receptor which may play a role in the perception of bitterness. The chain is Taste receptor type 2 member 129 from Mus musculus (Mouse).